The following is a 246-amino-acid chain: MEFNKAQNIIGLRVLNDNVIWLWVKDKSVVVIDPSVHEPVIRYIDENNLHLKAILQTHHHSDHIGGTKPLIERWQNVKVIASSKEKKRIPFQNVSVEDGETLNILGEEVKIIEVLGHTSSHIAFFLNGENPVLFIGDTLFSGGCGRIFEGTYQQMYSSLERIKSLPKDTLIYCAHEYTKSNILWALNLKPKDQDLKNKLSEVEKKLSLNKLTIPFLLDEEMKINLFLRAKNLEEFTFLRANKDLWV.

7 residues coordinate Zn(2+): histidine 58, histidine 60, aspartate 62, histidine 63, histidine 117, aspartate 137, and histidine 175.

The protein belongs to the metallo-beta-lactamase superfamily. Glyoxalase II family. Monomer. Zn(2+) is required as a cofactor.

The enzyme catalyses an S-(2-hydroxyacyl)glutathione + H2O = a 2-hydroxy carboxylate + glutathione + H(+). The protein operates within secondary metabolite metabolism; methylglyoxal degradation; (R)-lactate from methylglyoxal: step 2/2. In terms of biological role, thiolesterase that catalyzes the hydrolysis of S-D-lactoyl-glutathione to form glutathione and D-lactic acid. This Prochlorococcus marinus (strain MIT 9301) protein is Hydroxyacylglutathione hydrolase.